We begin with the raw amino-acid sequence, 240 residues long: Ribosomal RNA small subunit methyltransferase G (240 aa).

Residues glycine 78, phenylalanine 83, 129-130 (AE), and arginine 147 each bind S-adenosyl-L-methionine. The tract at residues 218-240 (RRQTSKKYPRKPGTPNKSPLLEN) is disordered.

Belongs to the methyltransferase superfamily. RNA methyltransferase RsmG family.

It localises to the cytoplasm. Specifically methylates the N7 position of guanine in position 535 of 16S rRNA. The sequence is that of Ribosomal RNA small subunit methyltransferase G from Staphylococcus haemolyticus (strain JCSC1435).